Reading from the N-terminus, the 954-residue chain is DNA repair and telomere maintenance protein NBS1 (954 aa).

An FHA domain is found at 22–85 (YLFGRTVAEA…KGTLVNGVQI (64 aa)). BRCT domains are found at residues 107-186 (TLKI…NAIV) and 244-349 (GYTF…LEAI). Positions 368–377 (VSVSASVEPQ) are enriched in polar residues. Disordered stretches follow at residues 368-431 (VSVS…FKGF), 444-506 (QAQS…PLPE), 528-580 (IEAG…KQED), 630-654 (VRQPEPHGPNRTREQDIADGRWDPR), and 692-954 (GIGD…GRRR). The segment covering 378 to 393 (SSEKVRPAVEDRKEVE) has biased composition (basic and acidic residues). Over residues 416 to 428 (PHRRERRTGRSRF) the composition is skewed to basic residues. Over residues 458-471 (PSASQDSLFVSQRE) the composition is skewed to polar residues. Acidic residues predominate over residues 541–554 (PEPEREDEDVEMVE). 2 stretches are compositionally biased toward basic and acidic residues: residues 640 to 654 (RTREQDIADGRWDPR) and 704 to 715 (GRVPRRPKETQT). The span at 726–737 (DGSGFAAAAASG) shows a compositional bias: low complexity. Residues 738-751 (KGKEKDKENEKEVG) are compositionally biased toward basic and acidic residues. Low complexity-rich tracts occupy residues 801 to 815 (EVVSSFPSVIPASEP) and 826 to 842 (RANALRSSAHSSQSQTQ). The segment covering 936-945 (GSEEESEDDE) has biased composition (acidic residues).

Belongs to the Nibrin family. In terms of assembly, component of the MRN complex composed of two heterodimers RAD50 and MRE11 associated with a single NBS1.

The protein localises to the nucleus. Its subcellular location is the chromosome. In terms of biological role, component of the MRN complex, which plays a central role in double-strand break (DSB) repair, DNA recombination, maintenance of telomere integrity and meiosis. The MRN complex is involved in the repair of DNA double-strand breaks (DSBs) via homologous recombination (HR), an error-free mechanism which primarily occurs during S and G2 phases. The complex (1) mediates the end resection of damaged DNA, which generates proper single-stranded DNA, a key initial steps in HR, and is (2) required for the recruitment of other repair factors and efficient activation of ATM and ATR upon DNA damage. The MRN complex possesses single-strand endonuclease activity and double-strand-specific 3'-5' exonuclease activity, which are provided by MRE11, to initiate end resection, which is required for single-strand invasion and recombination. Within the MRN complex, NBS1 acts as a protein-protein adapter, which specifically recognizes and binds phosphorylated proteins, promoting their recruitment to DNA damage sites. Recruits MRE11 and RAD50 components of the MRN complex to DSBs in response to DNA damage. The sequence is that of DNA repair and telomere maintenance protein NBS1 from Chaetomium thermophilum (strain DSM 1495 / CBS 144.50 / IMI 039719) (Thermochaetoides thermophila).